The primary structure comprises 427 residues: MTEAMKITLSTQPADARWGDKATYSINNDGITLHLNGKDDLGLIQRAARKIDGLGIKQVALTGEGWDTERCWAFWAGYKGPKGVRTVMWPDLDDAQRQELDNRLTIIDWVRDTINAPAEELGPEQLAQRAVDLLCSVACDSVTYRITKGEDLREQNYMGLHTVGRGSERPPVLLALDYNPTGDKDAPVYACLVGKGITFDSGGYSIKQSAFMDSMKSDMGGAATVTGALAFAITRGLNKRVKLFLCCADNLISGNAFKLGDIIRYRNGKNVEVMNTDAEGRLVLADGLIDASAQHPRLIIDMATLTGAAKTALGNDYHALFSFDDTLAGRLLTSAAQENEPFWRLPLAEFHRNQLPSNFAELNNTGSATYPAGASTAAGFLSHFVENYREGWLHIDCSATYRKAPVEQWAAGATGLGVRTIANLLTA.

Positions 195 and 200 each coordinate Mn(2+). Lys-207 is an active-site residue. Mn(2+) is bound by residues Asp-218, Asp-277, and Glu-279. Residue Arg-281 is part of the active site.

This sequence belongs to the peptidase M17 family. As to quaternary structure, homohexamer. The cofactor is Mn(2+).

Its subcellular location is the cytoplasm. The enzyme catalyses Release of an N-terminal amino acid, Xaa, from a peptide or arylamide. Xaa is preferably Glu or Asp but may be other amino acids, including Leu, Met, His, Cys and Gln.. Probably plays an important role in intracellular peptide degradation. The protein is Peptidase B of Salmonella typhi.